The following is a 357-amino-acid chain: MADAATIAKLEEGFKKLEAATDCKSLLKKYLSKSIFDSLKAKKTGLGATLLDVIQSGVENLDSGVGIYAPDAEAYSLFAPLFDPIIEDYHKGFKQTDKHPNKDFGDVNQFVNVDPDGKFVISTRVRCGRSLEGYPFNPCLTEAQYKEMEEKVSSTLSGLEGELKGTYYPLAGMTKEVQQKLIDDHFLFKEGDRFLQAANACRYWPVGRGIYHNDNKTFLVWCNEEDHLRIISMQMGGDLGQVYRRLVSAVNDIEKRVPFSHHDRLGFLTFCPTNLGTTIRASVHIKLPKLAANREKLEEVAARYSLQVRGTRGEHTEAEGGVYDISNKRRMGLTEFQAVKEMQDGILELIKIEKEMA.

Positions 9–91 (KLEEGFKKLE…FDPIIEDYHK (83 aa)) constitute a Phosphagen kinase N-terminal domain. L-arginine is bound at residue 64–68 (GVGIY). Residues 119–356 (FVISTRVRCG…LELIKIEKEM (238 aa)) enclose the Phosphagen kinase C-terminal domain. Residues 122–126 (STRVR) and His-185 each bind ATP. Glu-225 is an L-arginine binding site. Arg-229 contributes to the ATP binding site. An L-arginine-binding site is contributed by Cys-271. ATP is bound by residues 280 to 284 (RASVH) and 309 to 314 (RGTRGE). Glu-314 contacts L-arginine.

The protein belongs to the ATP:guanido phosphotransferase family. Glycosylated. As to expression, muscle (at protein level).

It catalyses the reaction L-arginine + ATP = N(omega)-phospho-L-arginine + ADP + H(+). Functionally, catalyzes the reversible transfer of high energy ATP gamma-phosphate group to L-arginine. This Procambarus clarkii (Red swamp crayfish) protein is Arginine kinase Pro c 2.0101.